The primary structure comprises 451 residues: Tubulin alpha chain (451 aa).

Residue Gln11 participates in GTP binding. Lys40 carries the post-translational modification N6-acetyllysine. Positions 71, 144, 145, 179, 206, and 228 each coordinate GTP. Residue Glu71 coordinates Mg(2+). Glu254 is a catalytic residue. Residues 432 to 451 (YEEVGAESAEGDDEDEGEDY) form a disordered region.

Belongs to the tubulin family. In terms of assembly, dimer of alpha and beta chains. A typical microtubule is a hollow water-filled tube with an outer diameter of 25 nm and an inner diameter of 15 nM. Alpha-beta heterodimers associate head-to-tail to form protofilaments running lengthwise along the microtubule wall with the beta-tubulin subunit facing the microtubule plus end conferring a structural polarity. Microtubules usually have 13 protofilaments but different protofilament numbers can be found in some organisms and specialized cells. Requires Mg(2+) as cofactor. Undergoes a tyrosination/detyrosination cycle, the cyclic removal and re-addition of a C-terminal tyrosine residue by the enzymes tubulin tyrosine carboxypeptidase (TTCP) and tubulin tyrosine ligase (TTL), respectively. In terms of processing, acetylation of alpha chains at Lys-40 stabilizes microtubules and affects affinity and processivity of microtubule motors. This modification has a role in multiple cellular functions, ranging from cell motility, cell cycle progression or cell differentiation to intracellular trafficking and signaling.

It localises to the cytoplasm. Its subcellular location is the cytoskeleton. The enzyme catalyses GTP + H2O = GDP + phosphate + H(+). Tubulin is the major constituent of microtubules, a cylinder consisting of laterally associated linear protofilaments composed of alpha- and beta-tubulin heterodimers. Microtubules grow by the addition of GTP-tubulin dimers to the microtubule end, where a stabilizing cap forms. Below the cap, tubulin dimers are in GDP-bound state, owing to GTPase activity of alpha-tubulin. This is Tubulin alpha chain (TBA) from Daucus carota (Wild carrot).